We begin with the raw amino-acid sequence, 123 residues long: Small ribosomal subunit protein uS12 (123 aa).

The disordered stretch occupies residues 1–21 (MPTIEQLVRKGRQAKPKKSKT). A compositionally biased stretch (basic residues) spans 9 to 20 (RKGRQAKPKKSK). The residue at position 89 (Asp89) is a 3-methylthioaspartic acid.

The protein belongs to the universal ribosomal protein uS12 family. In terms of assembly, part of the 30S ribosomal subunit. Contacts proteins S8 and S17. May interact with IF1 in the 30S initiation complex.

Its function is as follows. With S4 and S5 plays an important role in translational accuracy. Interacts with and stabilizes bases of the 16S rRNA that are involved in tRNA selection in the A site and with the mRNA backbone. Located at the interface of the 30S and 50S subunits, it traverses the body of the 30S subunit contacting proteins on the other side and probably holding the rRNA structure together. The combined cluster of proteins S8, S12 and S17 appears to hold together the shoulder and platform of the 30S subunit. The chain is Small ribosomal subunit protein uS12 from Bifidobacterium longum subsp. infantis (strain ATCC 15697 / DSM 20088 / JCM 1222 / NCTC 11817 / S12).